The following is a 509-amino-acid chain: Glutamyl-tRNA(Gln) amidotransferase subunit B, mitochondrial (509 aa).

It belongs to the GatB/GatE family. GatB subfamily. In terms of assembly, subunit of the heterotrimeric GatFAB amidotransferase (AdT) complex, composed of A, B and F subunits.

The protein localises to the mitochondrion. The catalysed reaction is L-glutamyl-tRNA(Gln) + L-glutamine + ATP + H2O = L-glutaminyl-tRNA(Gln) + L-glutamate + ADP + phosphate + H(+). Its function is as follows. Allows the formation of correctly charged Gln-tRNA(Gln) through the transamidation of misacylated Glu-tRNA(Gln) in the mitochondria. The reaction takes place in the presence of glutamine and ATP through an activated gamma-phospho-Glu-tRNA(Gln). The polypeptide is Glutamyl-tRNA(Gln) amidotransferase subunit B, mitochondrial (Candida dubliniensis (strain CD36 / ATCC MYA-646 / CBS 7987 / NCPF 3949 / NRRL Y-17841) (Yeast)).